The following is a 576-amino-acid chain: MAGUK p55 subfamily member 7 (576 aa).

L27 domains lie at 10 to 65 (SDTG…KQSP) and 67 to 122 (PILH…YDPV). Residues 139–220 (IIRLVKNREP…AITFKIIPGS (82 aa)) enclose the PDZ domain. Residues 228 to 298 (EGKMFIKALF…PSKHFQERRL (71 aa)) enclose the SH3 domain. The segment at 289–383 (PSKHFQERRL…VGPVGVGLNE (95 aa)) is phospho-regulated basic and hydrophobic (PRBH) motif. Residues 368 to 560 (YRLVVLVGPV…AFNELKTTFD (193 aa)) enclose the Guanylate kinase-like domain. S409 is modified (phosphoserine).

The protein belongs to the MAGUK family. In terms of assembly, heterodimer; able to heterodimerize via its C-terminal L27 domain with LIN7A, LIN7B and LIN7C. Forms a tripartite complex composed of DLG1, MPP7 and LIN7 (LIN7A or LIN7C). Interacts with DLG1 via its N-terminal L27 domain. Interacts with PALS1 and PATJ. Phosphorylated by aPKC which promotes dissociation from the cell cortex.

It localises to the membrane. The protein localises to the lateral cell membrane. The protein resides in the cell junction. It is found in the tight junction. Its subcellular location is the adherens junction. It localises to the cytoplasm. The protein localises to the cell cortex. Functionally, acts as an important adapter that promotes epithelial cell polarity and tight junction formation via its interaction with DLG1. Involved in the assembly of protein complexes at sites of cell-cell contact. The protein is MAGUK p55 subfamily member 7 (MPP7) of Homo sapiens (Human).